Consider the following 136-residue polypeptide: Frataxin, mitochondrial (136 aa).

This sequence belongs to the frataxin family. Monomer. Oligomer.

The protein resides in the mitochondrion. The enzyme catalyses 4 Fe(2+) + O2 + 4 H(+) = 4 Fe(3+) + 2 H2O. Promotes the biosynthesis of heme as well as the assembly and repair of iron-sulfur clusters by delivering Fe(2+) to proteins involved in these pathways. May play a role in the protection against iron-catalyzed oxidative stress through its ability to catalyze the oxidation of Fe(2+) to Fe(3+). May be able to store large amounts of the metal in the form of a ferrihydrite mineral by oligomerization. This Caenorhabditis elegans protein is Frataxin, mitochondrial (frh-1).